We begin with the raw amino-acid sequence, 202 residues long: Elongation factor Ts, chloroplastic (202 aa).

This sequence belongs to the EF-Ts family.

It is found in the plastid. The protein localises to the chloroplast. In terms of biological role, associates with the EF-Tu.GDP complex and induces the exchange of GDP to GTP. It remains bound to the aminoacyl-tRNA.EF-Tu.GTP complex up to the GTP hydrolysis stage on the ribosome. This chain is Elongation factor Ts, chloroplastic (tsf), found in Phaeodactylum tricornutum (strain CCAP 1055/1).